The sequence spans 282 residues: Elongation factor Ts (282 aa).

Positions 80-83 (TDFV) are involved in Mg(2+) ion dislocation from EF-Tu.

The protein belongs to the EF-Ts family.

It localises to the cytoplasm. Associates with the EF-Tu.GDP complex and induces the exchange of GDP to GTP. It remains bound to the aminoacyl-tRNA.EF-Tu.GTP complex up to the GTP hydrolysis stage on the ribosome. The chain is Elongation factor Ts from Chlamydia trachomatis serovar L2 (strain ATCC VR-902B / DSM 19102 / 434/Bu).